We begin with the raw amino-acid sequence, 66 residues long: Large ribosomal subunit protein bL35 (66 aa).

It belongs to the bacterial ribosomal protein bL35 family.

The protein is Large ribosomal subunit protein bL35 of Ruegeria pomeroyi (strain ATCC 700808 / DSM 15171 / DSS-3) (Silicibacter pomeroyi).